The following is a 421-amino-acid chain: Histidine--tRNA ligase (421 aa).

It belongs to the class-II aminoacyl-tRNA synthetase family. In terms of assembly, homodimer.

It localises to the cytoplasm. The catalysed reaction is tRNA(His) + L-histidine + ATP = L-histidyl-tRNA(His) + AMP + diphosphate + H(+). This is Histidine--tRNA ligase from Ureaplasma urealyticum serovar 10 (strain ATCC 33699 / Western).